Reading from the N-terminus, the 326-residue chain is Diaminopimelate epimerase (326 aa).

The substrate site is built by Asn-13 and Asn-72. Catalysis depends on Cys-81, which acts as the Proton donor. Substrate contacts are provided by residues Gly-82 to Asn-83, Asn-169, Asn-205, and Glu-223 to Arg-224. The active-site Proton acceptor is Cys-232. A substrate-binding site is contributed by Gly-233 to Thr-234.

This sequence belongs to the diaminopimelate epimerase family. Homodimer.

It is found in the cytoplasm. The enzyme catalyses (2S,6S)-2,6-diaminopimelate = meso-2,6-diaminopimelate. Its pathway is amino-acid biosynthesis; L-lysine biosynthesis via DAP pathway; DL-2,6-diaminopimelate from LL-2,6-diaminopimelate: step 1/1. Functionally, catalyzes the stereoinversion of LL-2,6-diaminopimelate (L,L-DAP) to meso-diaminopimelate (meso-DAP), a precursor of L-lysine and an essential component of the bacterial peptidoglycan. In Enterococcus faecalis (strain ATCC 700802 / V583), this protein is Diaminopimelate epimerase.